Reading from the N-terminus, the 308-residue chain is Ribosomal RNA small subunit methyltransferase H (308 aa).

S-adenosyl-L-methionine-binding positions include 36–38 (GGH), D55, F86, D103, and Q110.

Belongs to the methyltransferase superfamily. RsmH family.

It is found in the cytoplasm. It catalyses the reaction cytidine(1402) in 16S rRNA + S-adenosyl-L-methionine = N(4)-methylcytidine(1402) in 16S rRNA + S-adenosyl-L-homocysteine + H(+). In terms of biological role, specifically methylates the N4 position of cytidine in position 1402 (C1402) of 16S rRNA. This chain is Ribosomal RNA small subunit methyltransferase H, found in Helicobacter pylori (strain B38).